An 823-amino-acid chain; its full sequence is DNA ligase (823 aa).

NAD(+) contacts are provided by residues 32–36 (DAEYD), 81–82 (SL), and Glu-121. Lys-123 serves as the catalytic N6-AMP-lysine intermediate. Residues Arg-144, Glu-181, Lys-299, and Lys-323 each coordinate NAD(+). Positions 449, 452, 467, and 473 each coordinate Zn(2+). The disordered stretch occupies residues 528 to 558 (ETADKGSSENENGDAETVSGDLSKYNTQNGK). A BRCT domain is found at 746-823 (GINKAVAGKT…SEAELLTLLC (78 aa)).

It belongs to the NAD-dependent DNA ligase family. LigA subfamily. Mg(2+) serves as cofactor. Requires Mn(2+) as cofactor.

The enzyme catalyses NAD(+) + (deoxyribonucleotide)n-3'-hydroxyl + 5'-phospho-(deoxyribonucleotide)m = (deoxyribonucleotide)n+m + AMP + beta-nicotinamide D-nucleotide.. DNA ligase that catalyzes the formation of phosphodiester linkages between 5'-phosphoryl and 3'-hydroxyl groups in double-stranded DNA using NAD as a coenzyme and as the energy source for the reaction. It is essential for DNA replication and repair of damaged DNA. This Neisseria gonorrhoeae (strain NCCP11945) protein is DNA ligase.